The sequence spans 200 residues: Holliday junction branch migration complex subunit RuvA (200 aa).

Residues 1–63 (MYAYVKGKLT…EDAQLLYGFS (63 aa)) form a domain I region. Residues 64–142 (SEEEKDMFLS…ITEEDSDSLL (79 aa)) form a domain II region. The tract at residues 143–149 (QVDATST) is flexible linker. The domain III stretch occupies residues 150–200 (VQDQFVQEAMLALEALGYSKRELAKVEKTLNKNKYDSVDEAVKAGLQLVVS).

Belongs to the RuvA family. As to quaternary structure, homotetramer. Forms an RuvA(8)-RuvB(12)-Holliday junction (HJ) complex. HJ DNA is sandwiched between 2 RuvA tetramers; dsDNA enters through RuvA and exits via RuvB. An RuvB hexamer assembles on each DNA strand where it exits the tetramer. Each RuvB hexamer is contacted by two RuvA subunits (via domain III) on 2 adjacent RuvB subunits; this complex drives branch migration. In the full resolvosome a probable DNA-RuvA(4)-RuvB(12)-RuvC(2) complex forms which resolves the HJ.

The protein resides in the cytoplasm. In terms of biological role, the RuvA-RuvB-RuvC complex processes Holliday junction (HJ) DNA during genetic recombination and DNA repair, while the RuvA-RuvB complex plays an important role in the rescue of blocked DNA replication forks via replication fork reversal (RFR). RuvA specifically binds to HJ cruciform DNA, conferring on it an open structure. The RuvB hexamer acts as an ATP-dependent pump, pulling dsDNA into and through the RuvAB complex. HJ branch migration allows RuvC to scan DNA until it finds its consensus sequence, where it cleaves and resolves the cruciform DNA. The chain is Holliday junction branch migration complex subunit RuvA from Staphylococcus aureus (strain Mu3 / ATCC 700698).